A 336-amino-acid chain; its full sequence is DNA topoisomerase 1B (336 aa).

Residues 79–336 (EIHIQGAEKE…KSYRKDVLGE (258 aa)) enclose the Topo IB-type catalytic domain. The O-(3'-phospho-DNA)-tyrosine intermediate role is filled by Tyr-294.

The protein belongs to the type IB topoisomerase family. Monomer.

The protein resides in the virion. The catalysed reaction is ATP-independent breakage of single-stranded DNA, followed by passage and rejoining.. Releases the supercoiling and torsional tension of DNA introduced during the DNA replication and transcription by transiently cleaving and rejoining one strand of the DNA duplex. Introduces a single-strand break via transesterification at a target site in duplex DNA. The scissile phosphodiester is attacked by the catalytic tyrosine of the enzyme, resulting in the formation of a DNA-(3'-phosphotyrosyl)-enzyme intermediate and the expulsion of a 5'-OH DNA strand. The free DNA strand then undergoes passage around the unbroken strand thus removing DNA supercoils. Finally, in the religation step, the DNA 5'-OH attacks the covalent intermediate to expel the active-site tyrosine and restore the DNA phosphodiester backbone. Cleaves DNA after CCCTT sequence. The chain is DNA topoisomerase 1B (TOP1E) from Acanthamoeba polyphaga mimivirus (APMV).